The following is a 194-amino-acid chain: Probable molybdenum cofactor guanylyltransferase (194 aa).

Residues 8–10 (LAG), Lys-20, and Asp-99 contribute to the GTP site. Asp-99 is a Mg(2+) binding site.

Belongs to the MobA family. The cofactor is Mg(2+).

The protein resides in the cytoplasm. It carries out the reaction Mo-molybdopterin + GTP + H(+) = Mo-molybdopterin guanine dinucleotide + diphosphate. Functionally, transfers a GMP moiety from GTP to Mo-molybdopterin (Mo-MPT) cofactor (Moco or molybdenum cofactor) to form Mo-molybdopterin guanine dinucleotide (Mo-MGD) cofactor. The chain is Probable molybdenum cofactor guanylyltransferase from Synechococcus elongatus (strain ATCC 33912 / PCC 7942 / FACHB-805) (Anacystis nidulans R2).